Consider the following 432-residue polypeptide: Enolase (432 aa).

A (2R)-2-phosphoglycerate-binding site is contributed by Gln163. The Proton donor role is filled by Glu205. The Mg(2+) site is built by Asp242, Glu285, and Asp312. Residues Lys337, Arg366, Ser367, and Lys388 each coordinate (2R)-2-phosphoglycerate. Lys337 acts as the Proton acceptor in catalysis.

It belongs to the enolase family. The cofactor is Mg(2+).

The protein localises to the cytoplasm. The protein resides in the secreted. Its subcellular location is the cell surface. The catalysed reaction is (2R)-2-phosphoglycerate = phosphoenolpyruvate + H2O. The protein operates within carbohydrate degradation; glycolysis; pyruvate from D-glyceraldehyde 3-phosphate: step 4/5. In terms of biological role, catalyzes the reversible conversion of 2-phosphoglycerate (2-PG) into phosphoenolpyruvate (PEP). It is essential for the degradation of carbohydrates via glycolysis. The chain is Enolase from Bifidobacterium longum subsp. infantis (strain ATCC 15697 / DSM 20088 / JCM 1222 / NCTC 11817 / S12).